We begin with the raw amino-acid sequence, 833 residues long: Leucine--tRNA ligase (833 aa).

The 'HIGH' region signature appears at 41 to 52 (PYPSGAGLHVGH). The short motif at 610 to 614 (KMSKS) is the 'KMSKS' region element. Lys613 contacts ATP.

Belongs to the class-I aminoacyl-tRNA synthetase family.

It is found in the cytoplasm. The catalysed reaction is tRNA(Leu) + L-leucine + ATP = L-leucyl-tRNA(Leu) + AMP + diphosphate. This chain is Leucine--tRNA ligase, found in Streptococcus pyogenes serotype M6 (strain ATCC BAA-946 / MGAS10394).